The primary structure comprises 217 residues: Protein LURP-one-related 2 (217 aa).

It belongs to the LOR family.

In terms of biological role, might be related to the phospholipid scramblase and tubby-like superfamily of membrane tethered transcription factors. The chain is Protein LURP-one-related 2 from Arabidopsis thaliana (Mouse-ear cress).